The sequence spans 262 residues: Tryptophan synthase alpha chain (262 aa).

Catalysis depends on proton acceptor residues Glu-47 and Asp-58.

Belongs to the TrpA family. As to quaternary structure, tetramer of two alpha and two beta chains.

It carries out the reaction (1S,2R)-1-C-(indol-3-yl)glycerol 3-phosphate + L-serine = D-glyceraldehyde 3-phosphate + L-tryptophan + H2O. The protein operates within amino-acid biosynthesis; L-tryptophan biosynthesis; L-tryptophan from chorismate: step 5/5. Functionally, the alpha subunit is responsible for the aldol cleavage of indoleglycerol phosphate to indole and glyceraldehyde 3-phosphate. The sequence is that of Tryptophan synthase alpha chain from Chromobacterium violaceum (strain ATCC 12472 / DSM 30191 / JCM 1249 / CCUG 213 / NBRC 12614 / NCIMB 9131 / NCTC 9757 / MK).